The chain runs to 681 residues: Methionine--tRNA ligase (681 aa).

The 'HIGH' region motif lies at 14–24 (PYANGSIHLGH). Zn(2+) is bound by residues C145, C148, C158, and C161. The short motif at 331-335 (KMSKS) is the 'KMSKS' region element. An ATP-binding site is contributed by K334. The tRNA-binding domain occupies 579–681 (TFAAVDLRVA…SGAKPGQRIK (103 aa)).

The protein belongs to the class-I aminoacyl-tRNA synthetase family. MetG type 1 subfamily. Homodimer. Zn(2+) serves as cofactor.

Its subcellular location is the cytoplasm. It catalyses the reaction tRNA(Met) + L-methionine + ATP = L-methionyl-tRNA(Met) + AMP + diphosphate. Is required not only for elongation of protein synthesis but also for the initiation of all mRNA translation through initiator tRNA(fMet) aminoacylation. The polypeptide is Methionine--tRNA ligase (Pseudomonas putida (strain W619)).